The sequence spans 321 residues: Phosphate acyltransferase (321 aa).

The protein belongs to the PlsX family. As to quaternary structure, homodimer. Probably interacts with PlsY.

It is found in the cytoplasm. It carries out the reaction a fatty acyl-[ACP] + phosphate = an acyl phosphate + holo-[ACP]. It functions in the pathway lipid metabolism; phospholipid metabolism. Functionally, catalyzes the reversible formation of acyl-phosphate (acyl-PO(4)) from acyl-[acyl-carrier-protein] (acyl-ACP). This enzyme utilizes acyl-ACP as fatty acyl donor, but not acyl-CoA. The polypeptide is Phosphate acyltransferase (Chlamydia trachomatis serovar A (strain ATCC VR-571B / DSM 19440 / HAR-13)).